A 471-amino-acid polypeptide reads, in one-letter code: Pneumolysin (471 aa).

The next 4 beta stranded transmembrane spans lie at 158 to 171 (MEQL…DFEK), 178 to 187 (IDFNSVHSGE), 256 to 265 (SDEVEAAFEA), and 273 to 285 (APQT…LDNT). A Conserved undecapeptide motif is present at residues 427–437 (ECTGLAWEWWR). The Cholesterol binding signature appears at 459–460 (TL).

It belongs to the cholesterol-dependent cytolysin family. As to quaternary structure, elongated monomers align along their lengths, indicating intersubunit contacts and suggesting the prepore structure. Modeling based on cryo-EM shows a homooligomeric pore complex containing 38-44 subunits; when inserted in the host membrane. The size of isolated pores is detergent-dependent; in amphipol A8-35 homogenous rings form with 42 subunits.

It localises to the secreted. The protein localises to the host cell membrane. Its activity is regulated as follows. Erythrocytes hemolysis is inhibited by cholesterol. A cholesterol-dependent toxin that causes cytolysis by forming pores in cholesterol-containing host membranes. After binding to target membranes, the protein undergoes a major conformation change, leading to its insertion in the host membrane and formation of an oligomeric pore complex. Cholesterol is required for binding to host membranes, membrane insertion and pore formation; cholesterol binding is mediated by a Thr-Leu pair in the C-terminus. Can be reversibly inactivated by oxidation. The polypeptide is Pneumolysin (ply) (Streptococcus pneumoniae serotype 2 (strain D39 / NCTC 7466)).